A 297-amino-acid chain; its full sequence is Probable E3 SUMO-protein ligase RNF212 (297 aa).

The segment at 7-46 adopts an RING-type zinc-finger fold; sequence CNRCFQPPHRTSCFSLTNCGHVYCDACLGKGKKNECLICK. Residues 91-124 adopt a coiled-coil conformation; the sequence is RKRLLAFYREKISRLEESLRKSVLQIEQLQSMRS.

The protein localises to the nucleus. Its subcellular location is the chromosome. The protein operates within protein modification; protein sumoylation. SUMO E3 ligase that acts as a regulator of crossing-over during meiosis: required to couple chromosome synapsis to the formation of crossover-specific recombination complexes. Localizes to recombination sites and stabilizes meiosis-specific recombination factors, such as MutS-gamma complex proteins (MSH4 and MSH5) and TEX11. May mediate sumoylation of target proteins MSH4 and/or MSH5, leading to enhance their binding to recombination sites. Acts as a limiting factor for crossover designation and/or reinforcement and plays an antagonist role with CCNB1IP1/HEI10 in the regulation of meiotic recombination. This chain is Probable E3 SUMO-protein ligase RNF212 (RNF212), found in Homo sapiens (Human).